We begin with the raw amino-acid sequence, 360 residues long: NAD(P)H-quinone oxidoreductase subunit 1, chloroplastic (360 aa).

A run of 8 helical transmembrane segments spans residues 27–47 (IWIFVPIFSLVLGIITGVLVI), 98–118 (FSIGPSIAVISILLSYSIIPF), 129–149 (IGIFLWIAISSIAPIGLLMSG), 165–185 (AAQSISYEIPLTLCVLSISLL), 203–223 (FWGWNLWRQPIGFIIFLISSL), 253–273 (FGLFYVASYLNLLISSLFVTV), 297–317 (IFGTTIGIFITLAKTYLFLFI), and 340–360 (FLLPISLGNLLLTTSFQLFSL).

This sequence belongs to the complex I subunit 1 family. In terms of assembly, NDH is composed of at least 16 different subunits, 5 of which are encoded in the nucleus.

The protein localises to the plastid. It localises to the chloroplast thylakoid membrane. It catalyses the reaction a plastoquinone + NADH + (n+1) H(+)(in) = a plastoquinol + NAD(+) + n H(+)(out). The enzyme catalyses a plastoquinone + NADPH + (n+1) H(+)(in) = a plastoquinol + NADP(+) + n H(+)(out). Functionally, NDH shuttles electrons from NAD(P)H:plastoquinone, via FMN and iron-sulfur (Fe-S) centers, to quinones in the photosynthetic chain and possibly in a chloroplast respiratory chain. The immediate electron acceptor for the enzyme in this species is believed to be plastoquinone. Couples the redox reaction to proton translocation, and thus conserves the redox energy in a proton gradient. The protein is NAD(P)H-quinone oxidoreductase subunit 1, chloroplastic of Lobularia maritima (Sweet alyssum).